We begin with the raw amino-acid sequence, 29 residues long: Orphan peptide CllNtx (29 aa).

Post-translationally, contains 3 disulfide bonds. As to expression, expressed by the venom gland.

The protein resides in the secreted. May act as a toxin. This chain is Orphan peptide CllNtx, found in Centruroides limpidus (Mexican scorpion).